The following is a 134-amino-acid chain: MLSPKRTRFRKQHRGRMKGISHRGNHISFGKYALQALEPAWITSRQIEAGRRAMTRNARRGGKIWVRIFPDKPVTLRPAETRMGSGKGSPEYWVAVVKPGRILYEMGGVTENIARRAISLAASKMPIQTQFIIS.

The tract at residues 1-22 is disordered; sequence MLSPKRTRFRKQHRGRMKGISH.

Belongs to the universal ribosomal protein uL16 family. Part of the 50S ribosomal subunit.

It localises to the plastid. The protein localises to the chloroplast. This chain is Large ribosomal subunit protein uL16c, found in Nicotiana tomentosiformis (Tobacco).